Consider the following 269-residue polypeptide: Formamidopyrimidine-DNA glycosylase (269 aa).

The Schiff-base intermediate with DNA role is filled by Pro2. Glu3 (proton donor) is an active-site residue. Lys57 serves as the catalytic Proton donor; for beta-elimination activity. DNA-binding residues include His90, Arg109, and Lys150. Residues 235–269 (LVYGKAGEPCPECGEPLQELKIGQRNTFFCNECQQ) form an FPG-type zinc finger. The active-site Proton donor; for delta-elimination activity is the Arg259.

This sequence belongs to the FPG family. As to quaternary structure, monomer. It depends on Zn(2+) as a cofactor.

The catalysed reaction is Hydrolysis of DNA containing ring-opened 7-methylguanine residues, releasing 2,6-diamino-4-hydroxy-5-(N-methyl)formamidopyrimidine.. It catalyses the reaction 2'-deoxyribonucleotide-(2'-deoxyribose 5'-phosphate)-2'-deoxyribonucleotide-DNA = a 3'-end 2'-deoxyribonucleotide-(2,3-dehydro-2,3-deoxyribose 5'-phosphate)-DNA + a 5'-end 5'-phospho-2'-deoxyribonucleoside-DNA + H(+). Involved in base excision repair of DNA damaged by oxidation or by mutagenic agents. Acts as a DNA glycosylase that recognizes and removes damaged bases. Has a preference for oxidized purines, such as 7,8-dihydro-8-oxoguanine (8-oxoG). Has AP (apurinic/apyrimidinic) lyase activity and introduces nicks in the DNA strand. Cleaves the DNA backbone by beta-delta elimination to generate a single-strand break at the site of the removed base with both 3'- and 5'-phosphates. In Vibrio parahaemolyticus serotype O3:K6 (strain RIMD 2210633), this protein is Formamidopyrimidine-DNA glycosylase.